Consider the following 211-residue polypeptide: Endo-1,4-beta-xylanase 5 (211 aa).

The signal sequence occupies residues 1–16 (MKVTAAFASLLLTAFA). The GH11 domain maps to 19–210 (APEPVLVSRS…GVGSASVTIS (192 aa)). The active-site Nucleophile is glutamate 106. Glutamate 197 (proton donor) is an active-site residue.

The protein belongs to the glycosyl hydrolase 11 (cellulase G) family.

Its subcellular location is the secreted. It carries out the reaction Endohydrolysis of (1-&gt;4)-beta-D-xylosidic linkages in xylans.. It participates in glycan degradation; xylan degradation. In terms of biological role, endo-1,4-beta-xylanase involved in the hydrolysis of xylan, a major structural heterogeneous polysaccharide found in plant biomass representing the second most abundant polysaccharide in the biosphere, after cellulose. The sequence is that of Endo-1,4-beta-xylanase 5 (XYN5) from Aspergillus niger.